We begin with the raw amino-acid sequence, 158 residues long: Putative ribosomal RNA large subunit methyltransferase H (158 aa).

Residues L76, G107, and 126-131 each bind S-adenosyl-L-methionine; that span reads LSRMTF.

This sequence belongs to the RNA methyltransferase RlmH family.

Its subcellular location is the cytoplasm. It carries out the reaction pseudouridine(1915) in 23S rRNA + S-adenosyl-L-methionine = N(3)-methylpseudouridine(1915) in 23S rRNA + S-adenosyl-L-homocysteine + H(+). Functionally, specifically methylates the pseudouridine at position 1915 (m3Psi1915) in 23S rRNA. The polypeptide is Putative ribosomal RNA large subunit methyltransferase H (Methanocorpusculum labreanum (strain ATCC 43576 / DSM 4855 / Z)).